The following is a 334-amino-acid chain: Ribosomal RNA small subunit methyltransferase H (334 aa).

Residues 54-56 (GGH), D74, F100, D121, and Q128 each bind S-adenosyl-L-methionine. The disordered stretch occupies residues 272–318 (RHSKGQYPEDENLPMPPKRPRYFSKPKRVGPSKAEISNNPRSRSAWL). Basic residues predominate over residues 289–301 (KRPRYFSKPKRVG).

It belongs to the methyltransferase superfamily. RsmH family.

It is found in the cytoplasm. It catalyses the reaction cytidine(1402) in 16S rRNA + S-adenosyl-L-methionine = N(4)-methylcytidine(1402) in 16S rRNA + S-adenosyl-L-homocysteine + H(+). Its function is as follows. Specifically methylates the N4 position of cytidine in position 1402 (C1402) of 16S rRNA. This chain is Ribosomal RNA small subunit methyltransferase H, found in Psychrobacter arcticus (strain DSM 17307 / VKM B-2377 / 273-4).